Consider the following 294-residue polypeptide: 4-hydroxy-tetrahydrodipicolinate synthase (294 aa).

Thr-45 serves as a coordination point for pyruvate. Residue Tyr-133 is the Proton donor/acceptor of the active site. Residue Lys-161 is the Schiff-base intermediate with substrate of the active site. Ile-203 lines the pyruvate pocket.

This sequence belongs to the DapA family. In terms of assembly, homotetramer; dimer of dimers.

Its subcellular location is the cytoplasm. It catalyses the reaction L-aspartate 4-semialdehyde + pyruvate = (2S,4S)-4-hydroxy-2,3,4,5-tetrahydrodipicolinate + H2O + H(+). It functions in the pathway amino-acid biosynthesis; L-lysine biosynthesis via DAP pathway; (S)-tetrahydrodipicolinate from L-aspartate: step 3/4. In terms of biological role, catalyzes the condensation of (S)-aspartate-beta-semialdehyde [(S)-ASA] and pyruvate to 4-hydroxy-tetrahydrodipicolinate (HTPA). This Buchnera aphidicola subsp. Schizaphis graminum (strain Sg) protein is 4-hydroxy-tetrahydrodipicolinate synthase.